A 221-amino-acid polypeptide reads, in one-letter code: NEDD8 ultimate buster 1 (221 aa).

3 consecutive UBA domains span residues 1 to 19 (LGLR…HIAN), 30 to 76 (EERE…LLHN), and 95 to 135 (SPSQ…LVHN). The tract at residues 136–193 (GGRLPPDLQLSAEDSSSTPSTSPSDSAGTSSASTDEDMETEAVNEILEDIPEHEEDYL) is disordered. The segment covering 146–168 (SAEDSSSTPSTSPSDSAGTSSAS) has biased composition (low complexity). Over residues 169–193 (TDEDMETEAVNEILEDIPEHEEDYL) the composition is skewed to acidic residues.

Directly interacts with NEDD8 and PSMD4/S5a, a member of the regulatory subunit of the 26S proteasome. Interacts with AIPL1.

The protein localises to the nucleus. In terms of biological role, specific down-regulator of the NEDD8 conjugation system. Recruits NEDD8 and its conjugates to the proteasome for degradation. This is NEDD8 ultimate buster 1 (NUB1) from Bos taurus (Bovine).